We begin with the raw amino-acid sequence, 695 residues long: UvrABC system protein C (695 aa).

Positions 1–10 are enriched in basic and acidic residues; sequence MNHDPAETRD. A disordered region spans residues 1 to 44; that stretch reads MNHDPAETRDTAAAPLADTESPSPVSPELTPHPAPAAQDIDTAT. The GIY-YIG domain occupies 88–166; the sequence is TSPGVYRMLN…IKQLRPRFNV (79 aa). A UVR domain is found at 276–311; the sequence is RAVKQELAVEMEKASNELEFETAALYRDRLAALSAI.

It belongs to the UvrC family. In terms of assembly, interacts with UvrB in an incision complex.

The protein resides in the cytoplasm. The UvrABC repair system catalyzes the recognition and processing of DNA lesions. UvrC both incises the 5' and 3' sides of the lesion. The N-terminal half is responsible for the 3' incision and the C-terminal half is responsible for the 5' incision. The chain is UvrABC system protein C from Rhodopseudomonas palustris (strain HaA2).